A 102-amino-acid chain; its full sequence is Small ribosomal subunit protein uS10 (102 aa).

Belongs to the universal ribosomal protein uS10 family. In terms of assembly, part of the 30S ribosomal subunit.

Functionally, involved in the binding of tRNA to the ribosomes. This chain is Small ribosomal subunit protein uS10, found in Acidothermus cellulolyticus (strain ATCC 43068 / DSM 8971 / 11B).